The following is a 186-amino-acid chain: Nicotinamidase/pyrazinamidase (186 aa).

The active-site Proton acceptor is the Asp-8. Positions 49, 51, 57, and 71 each coordinate Fe cation. Residue Lys-96 is part of the active site. Cys-138 functions as the Nucleophile in the catalytic mechanism.

Belongs to the isochorismatase family. In terms of assembly, monomer. Mn(2+) is required as a cofactor. Requires Fe(2+) as cofactor.

The enzyme catalyses nicotinamide + H2O = nicotinate + NH4(+). It catalyses the reaction pyrazinamide + H2O = pyrazine-2-carboxylate + NH4(+). It participates in cofactor biosynthesis; nicotinate biosynthesis; nicotinate from nicotinamide: step 1/1. Its activity is regulated as follows. Is inhibited by Cu(2+), Zn(2+) and Fe(3+). Catalyzes the deamidation of nicotinamide (NAM) into nicotinate. Likely functions in the cyclical salvage pathway for production of NAD from nicotinamide. Functionally, is involved in the activation of the first-line antituberculous drug pyrazinamide (PZA) by converting it into the active form, pyrazinoic acid. The sequence is that of Nicotinamidase/pyrazinamidase from Mycobacterium tuberculosis (strain ATCC 25618 / H37Rv).